The chain runs to 329 residues: Deoxynucleotidyltransferase terminal-interacting protein 1 (329 aa).

The segment at 1 to 27 (MGATGDVEQPRGPGGAERGGPELGDAG) is disordered. Positions 12-22 (GPGGAERGGPE) are enriched in gly residues. The interval 56 to 147 (MTTSFTDPAI…RLTHELPGIK (92 aa)) is important for dimerization. A DNA-binding region (a.T hook) is located at residues 159–173 (RGSPIPKKRKGRPPG). Residue serine 161 is modified to Phosphoserine. Residues 164 to 170 (PKKRKGR) carry the Nuclear localization signal motif. Positions 197–316 (REGPKWDPAR…MRKYMETLRT (120 aa)) are important for DNA and nucleosome binding. Residues 216–237 (GSRANKALGMGGTRGRIYIKHP) constitute a DNA-binding region (H-T-H motif).

In terms of assembly, monomer and homodimer. A minor proportion may form homotrimers. Interacts with ZNF541. Interacts with the terminal deoxynucleotidyltransferase DNTT. Interacts with TRERF1. Identified in a histone deacetylase complex that contains DNTTIP1, HDAC1 and MIDEAS; this complex assembles into a tetramer that contains four copies of each protein chain. Component of a histone deacetylase complex containing DNTTIP1, ZNF541, HDAC1 and HDAC2. Identified in a complex with KCTD19, HDAC1, HDAC2 and ZNF541.

Its subcellular location is the nucleus. Functionally, increases DNTT terminal deoxynucleotidyltransferase activity (in vitro). Also acts as a transcriptional regulator, binding to the consensus sequence 5'-GNTGCATG-3' following an AT-tract. Associates with RAB20 promoter and positively regulates its transcription. Binds DNA and nucleosomes; may recruit HDAC1 complexes to nucleosomes or naked DNA. The sequence is that of Deoxynucleotidyltransferase terminal-interacting protein 1 (DNTTIP1) from Bos taurus (Bovine).